Here is a 591-residue protein sequence, read N- to C-terminus: 4-coumarate--CoA ligase-like 3 (591 aa).

ATP contacts are provided by Ser-228, Ser-229, Gly-230, Thr-231, Ser-232, and Lys-236. (E)-4-coumaroyl-AMP is bound at residue Tyr-280. Arg-301 is a CoA binding site. Residues 303-375 (DAGDAVAAIG…QAFPHVDFIQ (73 aa)) are SBD1. 4 residues coordinate (E)-4-coumaroyl-AMP: Ala-353, Gln-375, Gly-376, and Thr-380. Residues Gln-375, Gly-376, Thr-380, Asp-459, and Arg-474 each contribute to the ATP site. Positions 376–440 (GYGMTESTAV…LHGPGIMKGY (65 aa)) are SBD2. Residues Lys-476 and Lys-480 each coordinate (E)-4-coumaroyl-AMP. CoA is bound by residues Lys-482 and Gly-483. Position 565 (Lys-565) interacts with ATP.

Belongs to the ATP-dependent AMP-binding enzyme family. Mg(2+) serves as cofactor.

It carries out the reaction (E)-4-coumarate + ATP + CoA = (E)-4-coumaroyl-CoA + AMP + diphosphate. The enzyme catalyses (E)-4-coumarate + ATP + H(+) = (E)-4-coumaroyl-AMP + diphosphate. The catalysed reaction is (E)-4-coumaroyl-AMP + CoA = (E)-4-coumaroyl-CoA + AMP + H(+). Carboxylate--CoA ligase that may use 4-coumarate as substrate. Follows a two-step reaction mechanism, wherein the carboxylate substrate first undergoes adenylation by ATP, followed by a thioesterification in the presence of CoA to yield the final CoA thioester. This chain is 4-coumarate--CoA ligase-like 3 (4CLL3), found in Oryza sativa subsp. japonica (Rice).